Consider the following 498-residue polypeptide: MEKYIMSLDQGTTSSRCIIFNKKGEVVSVAQKEFTQIYPKAGWVEHDPLEIWGKQAGVAGEALNIARISPEQIAGIGITNQRETTVVWNKRTGMPVYNAIVWQCRRTAGYCDELREKGLDKTIKEKTGLMLDAYFSATKIKWILDNVEGARELAEKGDLLFGNIDTWLIWNMTKGKIHVTDYTNASRTMLFNIHELKWDEELLEILDIPKSMLPEVKPSSCVYGETDEILFGVSIPISGDAGDQQAALFGQTCFNAGMAKNTYGTGCFLLMNTGEKAVDSKNGLLTTIAVGIDGKVEYALEGSIFIGGAVIQWLRDELRMVKTAQETEKYATEVEDNNGVYLVPAFVGIGAPYWDSYARGTILGLTRGAKKEHIIRAALESMAYQTHDVLKAMEEDSGIELKALKVDGGACQNNFLMQFQSDILGVEVDRPEVVETTALGAAYLAGLAVGYWKDRNEISQNWAISRSFAPAMEDEKKEKLIKGWHKAVTKAMDWEERE.

Residue Thr-12 participates in ADP binding. Residues Thr-12, Thr-13, and Ser-14 each contribute to the ATP site. Thr-12 lines the sn-glycerol 3-phosphate pocket. Arg-16 contacts ADP. Sn-glycerol 3-phosphate contacts are provided by Arg-82, Glu-83, Tyr-134, and Asp-243. Glycerol is bound by residues Arg-82, Glu-83, Tyr-134, Asp-243, and Gln-244. Residues Thr-265 and Gly-308 each contribute to the ADP site. Positions 265, 308, 312, and 409 each coordinate ATP. The ADP site is built by Gly-409 and Asn-413.

It belongs to the FGGY kinase family. As to quaternary structure, homotetramer and homodimer (in equilibrium).

The catalysed reaction is glycerol + ATP = sn-glycerol 3-phosphate + ADP + H(+). Its pathway is polyol metabolism; glycerol degradation via glycerol kinase pathway; sn-glycerol 3-phosphate from glycerol: step 1/1. With respect to regulation, activated by phosphorylation and inhibited by fructose 1,6-bisphosphate (FBP). Its function is as follows. Key enzyme in the regulation of glycerol uptake and metabolism. Catalyzes the phosphorylation of glycerol to yield sn-glycerol 3-phosphate. This Clostridium botulinum (strain Okra / Type B1) protein is Glycerol kinase.